We begin with the raw amino-acid sequence, 242 residues long: MIKEINIKIKNFEGPLDLLLHLVSQYEMDIFEVPLVPVIEQYLIYIQTMKELELELAGEYMLMASQLMLIKSRRLLPTVTETFIEDTEQLEYDLLAQIDEYRKYKMLSEDLDELHQERSHYYSKSKTEIITDETVLLQDKTALDLFLAFSKILELQRQQIEDDNTTIAAEKFTIADKIFELNQRFTEQKICKFTDLFSDKTKKDELVTTFMALLELIKNQQVSFSQGELFGEIILERKEISE.

This sequence belongs to the ScpA family. As to quaternary structure, component of a cohesin-like complex composed of ScpA, ScpB and the Smc homodimer, in which ScpA and ScpB bind to the head domain of Smc. The presence of the three proteins is required for the association of the complex with DNA.

The protein resides in the cytoplasm. In terms of biological role, participates in chromosomal partition during cell division. May act via the formation of a condensin-like complex containing Smc and ScpB that pull DNA away from mid-cell into both cell halves. In Lactococcus lactis subsp. cremoris (strain SK11), this protein is Segregation and condensation protein A.